Here is a 409-residue protein sequence, read N- to C-terminus: LL-diaminopimelate aminotransferase (409 aa).

Substrate-binding residues include Y15 and G42. Pyridoxal 5'-phosphate contacts are provided by residues Y72, 108–109 (SK), Y132, N187, Y218, and 246–248 (SFS). Substrate contacts are provided by K109, Y132, and N187. K249 carries the post-translational modification N6-(pyridoxal phosphate)lysine. Pyridoxal 5'-phosphate-binding residues include R257 and N292. Residues N292 and R388 each contribute to the substrate site.

This sequence belongs to the class-I pyridoxal-phosphate-dependent aminotransferase family. LL-diaminopimelate aminotransferase subfamily. In terms of assembly, homodimer. The cofactor is pyridoxal 5'-phosphate.

It catalyses the reaction (2S,6S)-2,6-diaminopimelate + 2-oxoglutarate = (S)-2,3,4,5-tetrahydrodipicolinate + L-glutamate + H2O + H(+). Its pathway is amino-acid biosynthesis; L-lysine biosynthesis via DAP pathway; LL-2,6-diaminopimelate from (S)-tetrahydrodipicolinate (aminotransferase route): step 1/1. Its function is as follows. Involved in the synthesis of meso-diaminopimelate (m-DAP or DL-DAP), required for both lysine and peptidoglycan biosynthesis. Catalyzes the direct conversion of tetrahydrodipicolinate to LL-diaminopimelate. In Acaryochloris marina (strain MBIC 11017), this protein is LL-diaminopimelate aminotransferase.